A 503-amino-acid chain; its full sequence is Aspartyl/glutamyl-tRNA(Asn/Gln) amidotransferase subunit B (503 aa).

Belongs to the GatB/GatE family. GatB subfamily. As to quaternary structure, heterotrimer of A, B and C subunits.

The enzyme catalyses L-glutamyl-tRNA(Gln) + L-glutamine + ATP + H2O = L-glutaminyl-tRNA(Gln) + L-glutamate + ADP + phosphate + H(+). It carries out the reaction L-aspartyl-tRNA(Asn) + L-glutamine + ATP + H2O = L-asparaginyl-tRNA(Asn) + L-glutamate + ADP + phosphate + 2 H(+). Its function is as follows. Allows the formation of correctly charged Asn-tRNA(Asn) or Gln-tRNA(Gln) through the transamidation of misacylated Asp-tRNA(Asn) or Glu-tRNA(Gln) in organisms which lack either or both of asparaginyl-tRNA or glutaminyl-tRNA synthetases. The reaction takes place in the presence of glutamine and ATP through an activated phospho-Asp-tRNA(Asn) or phospho-Glu-tRNA(Gln). The sequence is that of Aspartyl/glutamyl-tRNA(Asn/Gln) amidotransferase subunit B from Jannaschia sp. (strain CCS1).